The primary structure comprises 46 residues: Large ribosomal subunit protein bL34c (46 aa).

This sequence belongs to the bacterial ribosomal protein bL34 family.

It is found in the plastid. It localises to the chloroplast. The chain is Large ribosomal subunit protein bL34c from Pyropia yezoensis (Susabi-nori).